The primary structure comprises 428 residues: 3-phosphoshikimate 1-carboxyvinyltransferase (428 aa).

3 residues coordinate 3-phosphoshikimate: lysine 23, serine 24, and arginine 28. Phosphoenolpyruvate is bound at residue lysine 23. Phosphoenolpyruvate is bound by residues glycine 97 and arginine 125. 7 residues coordinate 3-phosphoshikimate: serine 170, serine 171, glutamine 172, serine 198, aspartate 314, asparagine 337, and lysine 341. Glutamine 172 lines the phosphoenolpyruvate pocket. Aspartate 314 serves as the catalytic Proton acceptor. Phosphoenolpyruvate contacts are provided by arginine 345, arginine 387, and lysine 412.

Belongs to the EPSP synthase family. Monomer.

The protein resides in the cytoplasm. The catalysed reaction is 3-phosphoshikimate + phosphoenolpyruvate = 5-O-(1-carboxyvinyl)-3-phosphoshikimate + phosphate. The protein operates within metabolic intermediate biosynthesis; chorismate biosynthesis; chorismate from D-erythrose 4-phosphate and phosphoenolpyruvate: step 6/7. Catalyzes the transfer of the enolpyruvyl moiety of phosphoenolpyruvate (PEP) to the 5-hydroxyl of shikimate-3-phosphate (S3P) to produce enolpyruvyl shikimate-3-phosphate and inorganic phosphate. In Hamiltonella defensa subsp. Acyrthosiphon pisum (strain 5AT), this protein is 3-phosphoshikimate 1-carboxyvinyltransferase.